The chain runs to 337 residues: Peptide methionine sulfoxide reductase MsrA/MsrB (337 aa).

The peptide methionine sulfoxide reductase A stretch occupies residues 28–181; it reads KDIYLAGGCF…PGGYCHVDLS (154 aa). Cysteine 36 is a catalytic residue. Residues 198-321 form the MsrB domain; that stretch reads KDELKAKLSD…NGASLKFIPL (124 aa). The Nucleophile role is filled by cysteine 310.

It in the N-terminal section; belongs to the MsrA Met sulfoxide reductase family. The protein in the C-terminal section; belongs to the MsrB Met sulfoxide reductase family.

The catalysed reaction is L-methionyl-[protein] + [thioredoxin]-disulfide + H2O = L-methionyl-(S)-S-oxide-[protein] + [thioredoxin]-dithiol. It carries out the reaction [thioredoxin]-disulfide + L-methionine + H2O = L-methionine (S)-S-oxide + [thioredoxin]-dithiol. The enzyme catalyses L-methionyl-[protein] + [thioredoxin]-disulfide + H2O = L-methionyl-(R)-S-oxide-[protein] + [thioredoxin]-dithiol. In terms of biological role, has an important function as a repair enzyme for proteins that have been inactivated by oxidation. Catalyzes the reversible oxidation-reduction of methionine sulfoxide in proteins to methionine. The polypeptide is Peptide methionine sulfoxide reductase MsrA/MsrB (msrAB) (Campylobacter fetus).